Here is a 557-residue protein sequence, read N- to C-terminus: Selenoprotein N (557 aa).

The segment at 1–24 (MGQARPAARRPHSPDPGAQPAPPR) is disordered. The signal sequence occupies residues 1 to 42 (MGQARPAARRPHSPDPGAQPAPPRRRARALALLGALLAAAAA). In terms of domain architecture, EF-hand spans 67–102 (VLGTDGLFLFSSLDTDQDMYISPEEFKPIAEKLTGS). Asparagine 156 is a glycosylation site (N-linked (GlcNAc...) asparagine). Residue selenocysteine 428 is a non-standard amino acid, selenocysteine. 2 N-linked (GlcNAc...) asparagine glycosylation sites follow: asparagine 449 and asparagine 497.

As to quaternary structure, interacts with RYR1, RYR2 and RYR3. Post-translationally, N-glycosylated.

Its subcellular location is the endoplasmic reticulum membrane. Functionally, plays an important role in cell protection against oxidative stress and in the regulation of redox-related calcium homeostasis. Regulates the calcium level of the ER by protecting the calcium pump ATP2A2 against the oxidoreductase ERO1A-mediated oxidative damage. Within the ER, ERO1A activity increases the concentration of H(2)O(2), which attacks the luminal thiols in ATP2A2 and thus leads to cysteinyl sulfenic acid formation (-SOH) and SEPN1 reduces the SOH back to free thiol (-SH), thus restoring ATP2A2 activity. Acts as a modulator of ryanodine receptor (RyR) activity: protects RyR from oxidation due to increased oxidative stress, or directly controls the RyR redox state, regulating the RyR-mediated calcium mobilization required for normal muscle development and differentiation. Essential for muscle regeneration and satellite cell maintenance in skeletal muscle. The polypeptide is Selenoprotein N (Mus musculus (Mouse)).